The following is a 267-amino-acid chain: Undecaprenyl-diphosphatase (267 aa).

A run of 8 helical transmembrane segments spans residues 1–21 (MTYF…FLPI), 39–59 (QGLA…VIYF), 83–103 (SNLA…GLLF), 111–131 (LRSA…LWWV), 149–169 (ALFL…RSGI), 189–209 (FLMS…KLAM), 218–238 (LLST…HFFL), and 246–266 (MMPF…WLAL).

The protein belongs to the UppP family.

Its subcellular location is the cell inner membrane. The catalysed reaction is di-trans,octa-cis-undecaprenyl diphosphate + H2O = di-trans,octa-cis-undecaprenyl phosphate + phosphate + H(+). Its function is as follows. Catalyzes the dephosphorylation of undecaprenyl diphosphate (UPP). Confers resistance to bacitracin. This Aliivibrio fischeri (strain MJ11) (Vibrio fischeri) protein is Undecaprenyl-diphosphatase.